The chain runs to 191 residues: Oleosin 20.3 kDa (191 aa).

At Ala-2 the chain carries N-acetylalanine. The tract at residues 2 to 54 (ANVDRDRRVHVDRTDKRVHQPNYEDDVGFGGYGGYGAGSDYKSRGPSTNQILA) is polar. A run of 2 helical transmembrane segments spans residues 52–72 (ILAL…AGLT) and 99–119 (LTIG…LTGL). Residues 55–128 (LIAGVPIGGT…LSSVSWVLNY (74 aa)) form a hydrophobic region.

Belongs to the oleosin family.

It is found in the lipid droplet. The protein localises to the membrane. May have a structural role to stabilize the lipid body during desiccation of the seed by preventing coalescence of the oil. Probably interacts with both lipid and phospholipid moieties of lipid bodies. May also provide recognition signals for specific lipase anchorage in lipolysis during seedling growth. The sequence is that of Oleosin 20.3 kDa (OL2) from Arabidopsis thaliana (Mouse-ear cress).